The primary structure comprises 345 residues: WD40 repeat protein poxJ (345 aa).

4 WD repeats span residues 15–49 (ANPP…YDVS), 59–100 (LFNF…EAQQ), 101–146 (VAAH…PLAT), and 250–284 (VNDV…RLKS).

It belongs to the WD repeat rae1 family.

It functions in the pathway secondary metabolite biosynthesis. Its function is as follows. WD40 repeat protein; part of the gene cluster that mediates the biosynthesis of oxaleimides, cytotoxic compounds containing an unusual disubstituted succinimide moiety. The first step of the pathway is provided by the HR-PKS poxF that serves in a new mode of collaborative biosynthesis with the PKS-NRPS poxE, by providing the olefin containing amino acid substrate via the synthesis of an ACP-bound dec-4-enoate. The cytochrome P450 monooxygenase poxM-catalyzed oxidation at the alpha-position creates the enzyme-bound 2-hydroxydec-4-enoyl-ACP thioester, which may be prone to spontaneous hydrolysis to yield 2-hydroxydec-4-enoic acid due to increased electrophilicity of the carbonyl. 2-hydroxydec-4-enoic acid can then be further oxidized by poxM to yield the alpha-ketoacid 2-oxodec-4-enoicacid, which is reductively aminated by the aminotransferase poxL to yield (S,E)-2-aminodec-4-enoic acid. The Hybrid PKS-NRPS synthetase poxE then performs condensation between the octaketide product of its PKS modules and the amino group of (S,E)-2-aminodec-4-enoic acid which is activated and incorporated by the adenylation domain. The resulting aminoacyl product can be cyclized by the Diels-Alderase PoxQ and reductively released by the reductive (R) domain of poxE to yield an aldehyde intermediate. The released aldehyde is then substrate for a Knoevenagel condensation by the hydrolyase poxO followed by an oxidation at the 5-position of the pyrrolidone ring. The presence of the olefin from the amino acid building block allows for migration of the substituted allyl group to occur. This allylic transposition reaction takes place in a conjugate addition, semipinacol-like fashion to yield a succinimide intermediate. Iterative two-electron oxidations of the C7 methyl of the succinimide intermediate to the carboxylic acid can be catalyzed by one of two remaining cytochrome P450 monooxygenasess poxC or poxD to yield oxaleimide A. Subsequent oxidation yields the maleimide scaffold oxaleimide I. Both oxaleimide A and oxaleimide I can undergo oxidative modifications in the decalin ring to yield the series of products oxaleimides B to H. In Penicillium oxalicum (strain 114-2 / CGMCC 5302) (Penicillium decumbens), this protein is WD40 repeat protein poxJ.